Reading from the N-terminus, the 232-residue chain is Large ribosomal subunit protein uL1 (232 aa).

Belongs to the universal ribosomal protein uL1 family. In terms of assembly, part of the 50S ribosomal subunit.

Its function is as follows. Binds directly to 23S rRNA. The L1 stalk is quite mobile in the ribosome, and is involved in E site tRNA release. In terms of biological role, protein L1 is also a translational repressor protein, it controls the translation of the L11 operon by binding to its mRNA. This is Large ribosomal subunit protein uL1 from Jannaschia sp. (strain CCS1).